The chain runs to 241 residues: Proteasome subunit alpha (241 aa).

It belongs to the peptidase T1A family. In terms of assembly, the 20S proteasome core is composed of 14 alpha and 14 beta subunits that assemble into four stacked heptameric rings, resulting in a barrel-shaped structure. The two inner rings, each composed of seven catalytic beta subunits, are sandwiched by two outer rings, each composed of seven alpha subunits. The catalytic chamber with the active sites is on the inside of the barrel. Has a gated structure, the ends of the cylinder being occluded by the N-termini of the alpha-subunits. Is capped by the proteasome-associated ATPase, ARC.

It is found in the cytoplasm. Its pathway is protein degradation; proteasomal Pup-dependent pathway. With respect to regulation, the formation of the proteasomal ATPase ARC-20S proteasome complex, likely via the docking of the C-termini of ARC into the intersubunit pockets in the alpha-rings, may trigger opening of the gate for substrate entry. Interconversion between the open-gate and close-gate conformations leads to a dynamic regulation of the 20S proteasome proteolysis activity. Functionally, component of the proteasome core, a large protease complex with broad specificity involved in protein degradation. This is Proteasome subunit alpha from Frankia alni (strain DSM 45986 / CECT 9034 / ACN14a).